A 463-amino-acid polypeptide reads, in one-letter code: 4-hydroxybenzoate polyprenyltransferase, mitochondrial (463 aa).

Disordered regions lie at residues 28–48 and 133–152; these read NNNTNNNNNNNGINKYNSTFN and LLDDNNSNSNNNNNSNNNKP. Residues 137-150 show a composition bias toward low complexity; sequence NNSNSNNNNNSNNN. The next 7 helical transmembrane spans lie at 181 to 201, 206 to 226, 257 to 277, 305 to 325, 330 to 350, 375 to 395, and 431 to 451; these read IGVWLLLYPCCWSISLAAPAG, LKTMLVFGIGAYVMRSAGCVI, LIFLGGQLLASFGLILSSLNY, FVLGLAFNWGALAGYSAIAGS, IVAPLYLAGISWTMVYDTIYA, IILSVFSGLVISGMFLTGIAA, and FISNKNFGLYFLLIIIVSKLL.

The protein belongs to the UbiA prenyltransferase family. The cofactor is Mg(2+).

It is found in the mitochondrion inner membrane. It catalyses the reaction an all-trans-polyprenyl diphosphate + 4-hydroxybenzoate = a 4-hydroxy-3-(all-trans-polyprenyl)benzoate + diphosphate. It participates in cofactor biosynthesis; ubiquinone biosynthesis. In terms of biological role, catalyzes the prenylation of para-hydroxybenzoate (PHB) with an all-trans polyprenyl group. Mediates the second step in the final reaction sequence of coenzyme Q (CoQ) biosynthesis, which is the condensation of the polyisoprenoid side chain with PHB. Its function is as follows. Catalyzes the prenylation of para-hydroxybenzoate (PHB) with an all-trans polyprenyl group. Mediates the second step in the final reaction sequence of coenzyme Q (CoQ) biosynthesis, which is the condensation of the polyisoprenoid side chain with PHB, generating the first membrane-bound Q intermediate. This Dictyostelium discoideum (Social amoeba) protein is 4-hydroxybenzoate polyprenyltransferase, mitochondrial.